The sequence spans 466 residues: Tryptophan synthase beta chain 2, chloroplastic (466 aa).

Lysine 161 bears the N6-(pyridoxal phosphate)lysine mark.

This sequence belongs to the TrpB family. In terms of assembly, tetramer of two alpha and two beta chains. Requires pyridoxal 5'-phosphate as cofactor.

It is found in the plastid. It localises to the chloroplast. It carries out the reaction (1S,2R)-1-C-(indol-3-yl)glycerol 3-phosphate + L-serine = D-glyceraldehyde 3-phosphate + L-tryptophan + H2O. It functions in the pathway amino-acid biosynthesis; L-tryptophan biosynthesis; L-tryptophan from chorismate: step 5/5. The beta subunit is responsible for the synthesis of L-tryptophan from indole and L-serine. The chain is Tryptophan synthase beta chain 2, chloroplastic (TSB) from Camptotheca acuminata (Happy tree).